The sequence spans 4151 residues: Mycoketide-CoA synthase (4151 aa).

A coiled-coil region spans residues 2-32; that stretch reads VDQLQHATEALRKALVQVERLKRTNRALLER. In terms of domain architecture, Ketosynthase family 3 (KS3) 1 spans 34-457; that stretch reads SEPIAIVGMS…GTNAHVIIEA (424 aa). Module stretches follow at residues 35-2038 and 2057-4070; these read EPIA…RTEL and DPIA…RREL. C203 functions as the Acyl-thioester intermediate; for beta-ketoacyl synthase 1 activity in the catalytic mechanism. Active-site for beta-ketoacyl synthase 1 activity residues include H338 and H379. The tract at residues 559–880 is acyltransferase 1; the sequence is VFVFPGQGSQ…AASAFVAGVA (322 aa). S650 (acyl-ester intermediate; for acyltransferase 1 activity) is an active-site residue. The N-terminal hotdog fold 1 stretch occupies residues 926-1048; the sequence is HPLLGAVVDL…GILRPGSVEP (123 aa). Positions 926–1194 are dehydratase 1; the sequence is HPLLGAVVDL…VARPVTERQL (269 aa). The PKS/mFAS DH 1 domain occupies 926 to 1195; the sequence is HPLLGAVVDL…ARPVTERQLL (270 aa). The Proton acceptor; for dehydratase activity 1 role is filled by H958. The tract at residues 1060-1195 is C-terminal hotdog fold 1; the sequence is AVTVDVADGY…ARPVTERQLL (136 aa). D1120 acts as the Proton donor; for dehydratase activity 1 in catalysis. The enoyl reductase 1 stretch occupies residues 1366–1671; that stretch reads GTFENLRLEP…QARHTGKVVM (306 aa). Residues 1680–1858 form a beta-ketoacyl reductase 1 region; it reads GTVLITGGTG…AISLGWGLWD (179 aa). The active-site For beta-ketoacyl reductase 1 activity is Y1828. The Carrier 1 domain occupies 1963 to 2038; sequence AVLLGLVRLH…RLASYIRTEL (76 aa). An O-(pantetheine 4'-phosphoryl)serine modification is found at S1998. One can recognise a Ketosynthase family 3 (KS3) 2 domain in the interval 2056–2480; that stretch reads EDPIAIVGMA…GTNAHVIIEA (425 aa). C2226 functions as the Acyl-thioester intermediate; for beta-ketoacyl synthase 2 activity in the catalytic mechanism. Active-site for beta-ketoacyl synthase 2 activity residues include H2361 and H2402. The segment at 2582-2893 is acyltransferase 2; sequence VFVFPGQGSQ…AVAQGFVTGM (312 aa). The active-site Acyl-ester intermediate; for acyltransferase 2 activity is the S2672. The N-terminal hotdog fold 2 stretch occupies residues 2940–3062; that stretch reads HALLGAVIDL…GALRAGSAEP (123 aa). The segment at 2940–3215 is dehydratase 2; it reads HALLGAVIDL…ARPVTDQQLR (276 aa). The PKS/mFAS DH 2 domain occupies 2940-3215; it reads HALLGAVIDL…ARPVTDQQLR (276 aa). The active-site Proton acceptor; for dehydratase activity 2 is the H2972. The tract at residues 3074–3215 is C-terminal hotdog fold 2; it reads AVPVEVADGY…ARPVTDQQLR (142 aa). The active-site Proton donor; for dehydratase activity 2 is D3135. Residues 3395 to 3701 form an enoyl reductase 2 region; the sequence is GTFENLRLEL…QARHTGKVVM (307 aa). The tract at residues 3710–3888 is beta-ketoacyl reductase 2; that stretch reads GTVLITGGTG…AISLGWGLWD (179 aa). Y3858 (for beta-ketoacyl reductase 2 activity) is an active-site residue. Residues 3995 to 4070 form the Carrier 2 domain; the sequence is AVLLDLVRSH…ALAGYMRREL (76 aa). S4030 carries the post-translational modification O-(pantetheine 4'-phosphoryl)serine.

As to quaternary structure, forms a large supramolecular assembly mediated through specific interactions between the N- and C-terminus linkers.

It carries out the reaction a medium-chain fatty acyl-CoA + 5 (S)-methylmalonyl-CoA + 5 malonyl-CoA + 22 NADPH + 32 H(+) = a mycoketide-CoA + 10 CO2 + 22 NADP(+) + 10 CoA + 11 H2O. It functions in the pathway lipid metabolism; fatty acid metabolism. Functionally, involved in the synthesis of beta-D-mannosyl phosphomycoketide (MPM), an antigenic mycobacterial polyketide. Binds a fatty acyl-CoA as a starter unit, and extends it by five rounds of alternative additions of malonyl-CoA and methylmalonyl-CoA extender units. Depending on the starter unit, the enzyme forms mycoketide-CoAs of different lengths. Shows preference for small-/medium-chain starter fatty acyl substrates. Uses a hybrid modularly iterative mechanism, by forming a supramolecular assembly to perform repetitive cycles of iterations. The sequence is that of Mycoketide-CoA synthase from Mycobacterium tuberculosis (strain ATCC 25618 / H37Rv).